A 383-amino-acid chain; its full sequence is Chaperone protein DnaJ (383 aa).

The J domain maps to 6 to 70 (DYYDVLGVGR…QKRAAYDQYG (65 aa)). The CR-type zinc finger occupies 140-222 (GKETKISYSR…CHGTGREEER (83 aa)). Zn(2+)-binding residues include C153, C156, C170, C173, C196, C199, C210, and C213. 4 CXXCXGXG motif repeats span residues 153–160 (CHTCHGSG), 170–177 (CHKCHGAG), 196–203 (CDVCGGTG), and 210–217 (CDTCHGTG).

Belongs to the DnaJ family. In terms of assembly, homodimer. It depends on Zn(2+) as a cofactor.

It is found in the cytoplasm. Participates actively in the response to hyperosmotic and heat shock by preventing the aggregation of stress-denatured proteins and by disaggregating proteins, also in an autonomous, DnaK-independent fashion. Unfolded proteins bind initially to DnaJ; upon interaction with the DnaJ-bound protein, DnaK hydrolyzes its bound ATP, resulting in the formation of a stable complex. GrpE releases ADP from DnaK; ATP binding to DnaK triggers the release of the substrate protein, thus completing the reaction cycle. Several rounds of ATP-dependent interactions between DnaJ, DnaK and GrpE are required for fully efficient folding. Also involved, together with DnaK and GrpE, in the DNA replication of plasmids through activation of initiation proteins. The polypeptide is Chaperone protein DnaJ (Latilactobacillus sakei (Lactobacillus sakei)).